Here is a 288-residue protein sequence, read N- to C-terminus: Diaminopimelate epimerase (288 aa).

2 residues coordinate substrate: asparagine 14 and asparagine 67. Cysteine 76 (proton donor) is an active-site residue. Substrate-binding positions include 77-78 (GN), asparagine 166, asparagine 199, and 217-218 (ER). Residue cysteine 226 is the Proton acceptor of the active site. 227-228 (GT) lines the substrate pocket.

Belongs to the diaminopimelate epimerase family. As to quaternary structure, homodimer.

The protein resides in the cytoplasm. It catalyses the reaction (2S,6S)-2,6-diaminopimelate = meso-2,6-diaminopimelate. Its pathway is amino-acid biosynthesis; L-lysine biosynthesis via DAP pathway; DL-2,6-diaminopimelate from LL-2,6-diaminopimelate: step 1/1. Its function is as follows. Catalyzes the stereoinversion of LL-2,6-diaminopimelate (L,L-DAP) to meso-diaminopimelate (meso-DAP), a precursor of L-lysine and an essential component of the bacterial peptidoglycan. This chain is Diaminopimelate epimerase, found in Bacillus cereus (strain 03BB102).